The chain runs to 215 residues: MKRGHEPKPAFGGAGEAGPGVMAERPLVPACPTGRPGRLQRHLLSGEFDQLRDFRIFESNFVQVTRLGEVANKVTMGVAASSPALELPDLLLLAGPAKENGHLQLFGLFPLQFVQLFVHDESRWQLKVKFRTGRAFYLQLRAPPESRDREFGQWVRLLYRLRFHSAQGAVPFTQDYSALEDDEDDDEDEDRDLPAGELQAMEARLDPQMSELWGL.

Disordered stretches follow at residues 1-20 (MKRG…AGPG) and 174-215 (QDYS…LWGL). Over residues 178-191 (ALEDDEDDDEDEDR) the composition is skewed to acidic residues.

It belongs to the GARIN family. In terms of assembly, interacts (via N-terminus) with RAB2B (in GTP-bound form).

It localises to the golgi apparatus. Functionally, RAB2B effector protein which promotes cytosolic DNA-induced innate immune responses. Regulates IFN responses against DNA viruses by regulating the CGAS-STING signaling axis. This chain is Golgi-associated RAB2 interactor protein 5A (GARIN5A), found in Bos taurus (Bovine).